Reading from the N-terminus, the 140-residue chain is Protein NrdI (140 aa).

It belongs to the NrdI family.

Its function is as follows. Probably involved in ribonucleotide reductase function. The sequence is that of Protein NrdI from Ruegeria sp. (strain TM1040) (Silicibacter sp.).